The sequence spans 232 residues: BTB/POZ domain-containing protein KCTD11 (232 aa).

The 49-residue stretch at 1–49 folds into the BTB domain; it reads MLGAMFRADTLMPANLNPQGDGHYFIDRDGKAFRHILNFLRLGRLDLPR.

As to quaternary structure, homopentamer. Interacts with KCTD6 and KCTD21; KCTD11 and KCTD6 or KCTD21 may associate in pentameric assemblies. Component of the BCR(KCTD11) E3 ubiquitin ligase complex, at least composed of CUL3 and KCTD11 and RBX1. Interacts (via BTB domain) with CUL3; initially a 4:4 stoichiometry has been reported, however, electron microscopy revealed pentameric states of the BTB domain. Weakly expressed in lung. In the cerebellum, higher expression in non proliferating external granule cells layer than in highly proliferating ones.

It participates in protein modification; protein ubiquitination. Functionally, plays a role as a marker and a regulator of neuronal differentiation; Up-regulated by a variety of neurogenic signals, such as retinoic acid, epidermal growth factor/EGF and NGFB/nerve growth factor. Induces apoptosis, growth arrest and the expression of cyclin-dependent kinase inhibitor CDKN1B. Plays a role as a tumor repressor and inhibits cell growth and tumorigenicity of medulloblastoma (MDB). Acts as a probable substrate-specific adapter for a BCR (BTB-CUL3-RBX1) E3 ubiquitin-protein ligase complex towards HDAC1. Functions as antagonist of the Hedgehog pathway on cell proliferation and differentiation by affecting the nuclear transfer of transcription factor GLI1, thus maintaining cerebellar granule cells in undifferentiated state, this effect probably occurs via HDAC1 down-regulation, keeping GLI1 acetylated and inactive. When knock-down, Hedgehog antagonism is impaired and proliferation of granule cells is sustained. Activates the caspase cascade. This is BTB/POZ domain-containing protein KCTD11 (Kctd11) from Mus musculus (Mouse).